The following is a 237-amino-acid chain: Pyridoxine 5'-phosphate synthase (237 aa).

Residues Asn7 and Arg18 each coordinate 3-amino-2-oxopropyl phosphate. His43 functions as the Proton acceptor in the catalytic mechanism. 1-deoxy-D-xylulose 5-phosphate contacts are provided by Arg45 and His50. Glu70 functions as the Proton acceptor in the catalytic mechanism. Thr100 provides a ligand contact to 1-deoxy-D-xylulose 5-phosphate. His190 functions as the Proton donor in the catalytic mechanism. Residues Asp191 and 213–214 each bind 3-amino-2-oxopropyl phosphate; that span reads GH.

This sequence belongs to the PNP synthase family. In terms of assembly, homooctamer; tetramer of dimers.

Its subcellular location is the cytoplasm. It catalyses the reaction 3-amino-2-oxopropyl phosphate + 1-deoxy-D-xylulose 5-phosphate = pyridoxine 5'-phosphate + phosphate + 2 H2O + H(+). It functions in the pathway cofactor biosynthesis; pyridoxine 5'-phosphate biosynthesis; pyridoxine 5'-phosphate from D-erythrose 4-phosphate: step 5/5. In terms of biological role, catalyzes the complicated ring closure reaction between the two acyclic compounds 1-deoxy-D-xylulose-5-phosphate (DXP) and 3-amino-2-oxopropyl phosphate (1-amino-acetone-3-phosphate or AAP) to form pyridoxine 5'-phosphate (PNP) and inorganic phosphate. This Christiangramia forsetii (strain DSM 17595 / CGMCC 1.15422 / KT0803) (Gramella forsetii) protein is Pyridoxine 5'-phosphate synthase.